Consider the following 294-residue polypeptide: MAIFTGAGVAIVTPFKENREVNYEKLGELIDFQINNGTDSIIICGTTGESSTLTHEEHIECIRFAIEYTKKRVPVIAGTGSNCTETAIYLSKEAQVAGADAVLLVTPYYNKATQKGLIEHFTAIAKSIDLPVMLYNVPSRTGCNILPGTAATLVNTVDNIVAMKEASSNIAQVAELAHTCEGKLDIYSGCDDSIVPVMSLGGLGVVSVLSNIAPRQTHDIVAKFLEGDTKGSLDLQLEYLPVINALFSEVNPIPVKKALNLMGFEVGPLRSPLTEMEDAHAKILADEMKKVGLI.

Thr-47 is a pyruvate binding site. Residue Tyr-135 is the Proton donor/acceptor of the active site. Catalysis depends on Lys-164, which acts as the Schiff-base intermediate with substrate. Val-206 provides a ligand contact to pyruvate.

Belongs to the DapA family. As to quaternary structure, homotetramer; dimer of dimers.

The protein resides in the cytoplasm. The enzyme catalyses L-aspartate 4-semialdehyde + pyruvate = (2S,4S)-4-hydroxy-2,3,4,5-tetrahydrodipicolinate + H2O + H(+). It functions in the pathway amino-acid biosynthesis; L-lysine biosynthesis via DAP pathway; (S)-tetrahydrodipicolinate from L-aspartate: step 3/4. Its function is as follows. Catalyzes the condensation of (S)-aspartate-beta-semialdehyde [(S)-ASA] and pyruvate to 4-hydroxy-tetrahydrodipicolinate (HTPA). In Lachnoclostridium phytofermentans (strain ATCC 700394 / DSM 18823 / ISDg) (Clostridium phytofermentans), this protein is 4-hydroxy-tetrahydrodipicolinate synthase.